We begin with the raw amino-acid sequence, 288 residues long: ATP synthase gamma chain (288 aa).

It belongs to the ATPase gamma chain family. As to quaternary structure, F-type ATPases have 2 components, CF(1) - the catalytic core - and CF(0) - the membrane proton channel. CF(1) has five subunits: alpha(3), beta(3), gamma(1), delta(1), epsilon(1). CF(0) has three main subunits: a, b and c.

The protein localises to the cell inner membrane. In terms of biological role, produces ATP from ADP in the presence of a proton gradient across the membrane. The gamma chain is believed to be important in regulating ATPase activity and the flow of protons through the CF(0) complex. This chain is ATP synthase gamma chain, found in Paracidovorax citrulli (strain AAC00-1) (Acidovorax citrulli).